A 327-amino-acid chain; its full sequence is 2-keto-3-deoxygluconate permease (327 aa).

10 helical membrane-spanning segments follow: residues 10 to 30, 42 to 62, 73 to 93, 95 to 115, 139 to 159, 163 to 183, 199 to 219, 224 to 244, 254 to 274, and 289 to 309; these read IPGG…TFSP, GMIT…GASI, KSGT…AIAS, IIPE…LALV, AGAF…IILG, IASF…VGFA, VQTL…LTVI, LLGI…LIIA, TAGI…VLIA, and SLVA…TSIW.

It belongs to the KdgT transporter family.

The protein localises to the cell inner membrane. The catalysed reaction is 2-dehydro-3-deoxy-D-gluconate(in) + H(+)(in) = 2-dehydro-3-deoxy-D-gluconate(out) + H(+)(out). In terms of biological role, catalyzes the proton-dependent uptake of 2-keto-3-deoxygluconate (KDG) into the cell. This Escherichia coli O139:H28 (strain E24377A / ETEC) protein is 2-keto-3-deoxygluconate permease.